The chain runs to 247 residues: Virulence plasmid protein pGP6-D (247 aa).

Belongs to the UPF0137 (pGP6-D) family.

In Chlamydia trachomatis, this protein is Virulence plasmid protein pGP6-D.